Consider the following 167-residue polypeptide: cAMP-dependent protein kinase type I-alpha regulatory subunit (167 aa).

The residue at position 12 (threonine 12) is a Phosphothreonine. Residues serine 14 and serine 20 each carry the phosphoserine modification. The Pseudophosphorylation motif motif lies at 30–33 (RGAI). Serine 34 is subject to Phosphoserine. Residues 51–78 (LFSH…SKVS), 79–167 (ILES…ILKR), glutamate 147, and arginine 156 contribute to the 3',5'-cyclic AMP site. Serine 82 bears the Phosphoserine mark.

The protein belongs to the cAMP-dependent kinase regulatory chain family. As to quaternary structure, the inactive holoenzyme is composed of two regulatory chains and two catalytic chains. Activation by cAMP releases the two active catalytic monomers and the regulatory dimer. Interacts with PRKACA and PRKACB. PRKAR1A also interacts with RFC2; the complex may be involved in cell survival. Interacts with AKAP4. Interacts with RARA; the interaction occurs in the presence of cAMP or FSH and regulates RARA transcriptional activity. Interacts with the phosphorylated form of PJA2. Interacts with CBFA2T3. Interacts with PRKX; regulates this cAMP-dependent protein kinase. Interacts with smAKAP; this interaction may target PRKAR1A to the plasma membrane. Interacts with AICDA. Post-translationally, the pseudophosphorylation site binds to the substrate-binding region of the catalytic chain, resulting in the inhibition of its activity.

It localises to the cell membrane. Its function is as follows. Regulatory subunit of the cAMP-dependent protein kinases involved in cAMP signaling in cells. The protein is cAMP-dependent protein kinase type I-alpha regulatory subunit of Mesocricetus auratus (Golden hamster).